The following is a 192-amino-acid chain: E3 ubiquitin-protein ligase RNF185 (192 aa).

Residues 1 to 27 (MASKGPSASASPENSSAGGPSGSSNGA) show a composition bias toward low complexity. The interval 1–30 (MASKGPSASASPENSSAGGPSGSSNGAGES) is disordered. The Cytoplasmic portion of the chain corresponds to 1 to 130 (MASKGPSASA…GGFQGFGFGD (130 aa)). The interval 29 to 80 (ESGGQDSTFECNICLDTAKDAVISLCGHLFCWPCLHQWLETRPNRQVCPVCK) is required for ubiquitin ligase activity and protection against ER stress-induced cell death. The RING-type zinc-finger motif lies at 39–80 (CNICLDTAKDAVISLCGHLFCWPCLHQWLETRPNRQVCPVCK). A disordered region spans residues 90–123 (PLYGRGSTGQQDPREKTPPRPQGQRPEPENRGGF). A helical transmembrane segment spans residues 131–151 (GGFQMSFGIGAFPFGIFATAF). At 152 to 171 (NINDGRPPPAVPGTPQYVDE) the chain is on the mitochondrial intermembrane side. The helical transmembrane segment at 172–192 (QFLSRLFLFVALVIMFWLLIA) threads the bilayer.

Interacts with ATG5 and BNIP1. As to expression, ubiquitously expressed.

The protein localises to the mitochondrion outer membrane. The protein resides in the endoplasmic reticulum membrane. It carries out the reaction S-ubiquitinyl-[E2 ubiquitin-conjugating enzyme]-L-cysteine + [acceptor protein]-L-lysine = [E2 ubiquitin-conjugating enzyme]-L-cysteine + N(6)-ubiquitinyl-[acceptor protein]-L-lysine.. The protein operates within protein modification; protein ubiquitination. Functionally, E3 ubiquitin-protein ligase that regulates selective mitochondrial autophagy by mediating 'Lys-63'-linked polyubiquitination of BNIP1. Acts in the endoplasmic reticulum (ER)-associated degradation (ERAD) pathway, which targets misfolded proteins that accumulate in the endoplasmic reticulum (ER) for ubiquitination and subsequent proteasome-mediated degradation. Protects cells from ER stress-induced apoptosis. Responsible for the cotranslational ubiquitination and degradation of CFTR in the ERAD pathway. Also acts as a regulator of the innate antiviral response by catalyzing 'Lys-27'-linked polyubiquitination of CGAS at 'Lys-173' and 'Lys-384', thereby promoting CGAS cyclic GMP-AMP synthase activity. Preferentially associates with the E2 enzymes UBE2J1 and UBE2J2. This Homo sapiens (Human) protein is E3 ubiquitin-protein ligase RNF185.